The chain runs to 307 residues: 2-methoxy-6-polyprenyl-1,4-benzoquinol methylase, mitochondrial (307 aa).

The N-terminal 19 residues, 1–19 (MLISSRIVRSSLVNVPLRL), are a transit peptide targeting the mitochondrion. S-adenosyl-L-methionine is bound by residues serine 122, aspartate 148, 179–180 (NG), and serine 197.

The protein belongs to the class I-like SAM-binding methyltransferase superfamily. MenG/UbiE family. Component of a multi-subunit COQ enzyme complex, composed of at least COQ3, COQ4, COQ5, COQ6, COQ7 and COQ9. Interacts with COQ3.

The protein resides in the mitochondrion inner membrane. The catalysed reaction is 2-methoxy-6-(all-trans-hexaprenyl)benzene-1,4-diol + S-adenosyl-L-methionine = 5-methoxy-2-methyl-3-(all-trans-hexaprenyl)benzene-1,4-diol + S-adenosyl-L-homocysteine + H(+). It functions in the pathway cofactor biosynthesis; ubiquinone biosynthesis. Methyltransferase required for the conversion of 2-hexaprenyl-6-methoxy-1,4-benzoquinol (DDMQH2) to 2-hexaprenyl-3-methyl-6-methoxy-1,4-benzoquinol (DMQH2). This Saccharomyces cerevisiae (strain ATCC 204508 / S288c) (Baker's yeast) protein is 2-methoxy-6-polyprenyl-1,4-benzoquinol methylase, mitochondrial.